Consider the following 186-residue polypeptide: CASP-like protein 4C2 (186 aa).

At 1–31 (MRSPQPHRSGGDTQQHFQSTVSVQKLKRFNS) the chain is on the cytoplasmic side. A helical membrane pass occupies residues 32–52 (LILVFRFAAFCFSLASAVFML). The Extracellular segment spans residues 53-71 (TNSRGSDSLHWYNFDAFRY). The helical transmembrane segment at 72 to 92 (VFAANAIVAIYSLFEMAASVW) threads the bilayer. The Cytoplasmic segment spans residues 93–103 (EISRNATLFPE). A helical transmembrane segment spans residues 104 to 124 (ICQVWFDFGHDQVFAYLLLSA). Over 125 to 150 (NTAGTELARTLKDTCTDNKAFCVQSD) the chain is Extracellular. A helical transmembrane segment spans residues 151 to 171 (IAIVLGFAGFLFLGISSLFSG). At 172–186 (FRVVCFIINGSRFYV) the chain is on the cytoplasmic side.

This sequence belongs to the Casparian strip membrane proteins (CASP) family. As to quaternary structure, homodimer and heterodimers.

It is found in the cell membrane. The polypeptide is CASP-like protein 4C2 (Populus trichocarpa (Western balsam poplar)).